Consider the following 554-residue polypeptide: Glutamine--tRNA ligase (554 aa).

Positions 34-44 (PEPNGYLHIGH) match the 'HIGH' region motif. Residues 35–37 (EPN) and 41–47 (HIGHAKS) each bind ATP. The L-glutamine site is built by Asp-67 and Tyr-212. Residues Thr-231, 261-262 (RL), and 269-271 (MSK) contribute to the ATP site. A 'KMSKS' region motif is present at residues 268–272 (VMSKR). Positions 317–324 (TKQDNTIE) are interaction with tRNA.

The protein belongs to the class-I aminoacyl-tRNA synthetase family. As to quaternary structure, monomer.

It is found in the cytoplasm. It carries out the reaction tRNA(Gln) + L-glutamine + ATP = L-glutaminyl-tRNA(Gln) + AMP + diphosphate. This is Glutamine--tRNA ligase from Shigella dysenteriae serotype 1 (strain Sd197).